An 838-amino-acid polypeptide reads, in one-letter code: MSSPSIAPVTPDLVRLRATARDKDDAIAQAAQLLVAAGCVAPGYDASMRRREGLANTFLGHGLAIPHGVGEDRHLVRRDGIAVLQLPEGVEWNPGQTTRLVVGIAAQSDTHITLLRRLTRLIQDPAQLEALFTTDDPAVIVAALTGDRAPDTSAAPATDLAERFEWTIAYPSGLHARPATRWAETARGFSARAQVRAGDQAADAKSLVGLLQLGLRAGDSITVSAKGSDAPALLKRLRAVMDSLTAQEKADAERAAQRRAAPVIGWTPPQAQPAIVGIGASPGVAIGIVHRLRAAQTEVADQPIGLGDGGVLLHDALTRTRQQLAAIQDDTQRRLGASDAAIFKAQAELLNDTDLITRTCQLMVEGHGVAWSWHQAVEQIASGLAALGNPVLAGRAADLRDVGRRVLAQLDPAAAGAGLTDLPEQPCILLAGDLSPSDTANLDTDCVLGLATAQGGPTSHTAILSRTLGLPALVAAGGQLLDIEDGVTAIIDGSSGRLYINPSELDLDAARTHIAEQQAIREREAAQRALPAETTDGHHIDIGANVNLPEQVAMALTQGAEGVGLMRTEFLFLERGSTPTEDEQYQTYLAMARALDGRPLIVRALDIGGDKQVAHLELPHEENPFLGVRGARLLLRRPDLLEPQLRALYRAAKDGARLSIMFPMITSVPELISLREICARIRAELDAPELPIGIMIEVPAAAAQADVLARHADFFSIGTNDLTQYVLAIDRQNPELAAEADSLHPAVLRMIRSTIDGARKHDRWVGVCGGLAGDPFGASLLAGLGVQELSMTPNDIPAVKARLRGRALSALQQLAEQALQCETAEQVRALEAQREGQA.

The 141-residue stretch at 7 to 147 folds into the PTS EIIA type-2 domain; sequence APVTPDLVRL…AVIVAALTGD (141 aa). Catalysis depends on His67, which acts as the Tele-phosphohistidine intermediate; for EIIA activity. Phosphohistidine; by HPr is present on His67. The HPr domain maps to 161 to 253; it reads AERFEWTIAY…LTAQEKADAE (93 aa). Catalysis depends on His175, which acts as the Pros-phosphohistidine intermediate; for HPr activity. Position 175 is a phosphohistidine; by EI (His175). Residues 274–838 are PTS EI; the sequence is AIVGIGASPG…ALEAQREGQA (565 aa). His460 functions as the Tele-phosphohistidine intermediate; for PTS EI activity in the catalytic mechanism. His460 carries the post-translational modification Phosphohistidine; by autocatalysis. 2 residues coordinate phosphoenolpyruvate: Arg567 and Arg603. The Mg(2+) site is built by Glu697 and Asp721. Residues 720–721 and Arg731 each bind phosphoenolpyruvate; that span reads ND. Residue Cys768 is the Proton donor of the active site.

The protein belongs to the PEP-utilizing enzyme family. Requires Mg(2+) as cofactor.

It is found in the cytoplasm. The catalysed reaction is L-histidyl-[protein] + phosphoenolpyruvate = N(pros)-phospho-L-histidyl-[protein] + pyruvate. Functionally, the phosphoenolpyruvate-dependent sugar phosphotransferase system (sugar PTS), a major carbohydrate active transport system, catalyzes the phosphorylation of incoming sugar substrates concomitantly with their translocation across the cell membrane. The enzyme II FruAB PTS system is involved in fructose transport. This Xanthomonas campestris pv. campestris (strain ATCC 33913 / DSM 3586 / NCPPB 528 / LMG 568 / P 25) protein is Multiphosphoryl transfer protein.